The sequence spans 319 residues: MGRSASLLRLRDPAPLPTDIAPDPAEAPPSPAADRRVIVVTGMSGAGRTTVLRALEDIGYEAVDNLPLSLFEALTQGRWDQPRPLVLGIDTRTRGFHAATVLAAIERLVAATGFDVRLLFIDCDDEVLVRRYTETRRRHPLAVDRPLADGIALERALVAPLKERASRCLDTSILPPAKLRAVIEAEFSLDHRPELAIFVSSFGFRNGLPREADLVFDVRFLANPHYEPHLREMTGLDPAVAAYVAADPDFAPLIDRVTALLALLVPRYEKEGKSYLTIAIGCTGGKHRSVYTAERLAAWLNETGRRAHVRHRDLKETPR.

The tract at residues 1–34 (MGRSASLLRLRDPAPLPTDIAPDPAEAPPSPAAD) is disordered. Residue 42 to 49 (GMSGAGRT) coordinates ATP. 90–93 (DTRT) contributes to the GTP binding site.

Belongs to the RapZ-like family.

Functionally, displays ATPase and GTPase activities. This Rhodospirillum rubrum (strain ATCC 11170 / ATH 1.1.1 / DSM 467 / LMG 4362 / NCIMB 8255 / S1) protein is Nucleotide-binding protein Rru_A3448.